A 237-amino-acid polypeptide reads, in one-letter code: uncharacterized protein (237 aa).

Residues 53–70 traverse the membrane as a helical segment; it reads LIFLATVLAGLILFYFGV. Residues 85-155 are disordered; that stretch reads PPIVIKPVAP…TQEKKDVKVA (71 aa). The stretch at 98–157 forms a coiled coil; it reads KTQESNQTTKKEVKQEEQKKEEPKKMVQKQETQEKREVKKSEKNEVKQTQEKKDVKVAKK. Composition is skewed to basic and acidic residues over residues 106 to 122 and 128 to 155; these read TKKE…EPKK and ETQE…VKVA. One can recognise an SPOR domain in the interval 165–237; the sequence is AANLRTYKFQ…HFKDAIFVRK (73 aa).

Its subcellular location is the membrane. This is an uncharacterized protein from Aquifex aeolicus (strain VF5).